We begin with the raw amino-acid sequence, 225 residues long: Prepilin leader peptidase/N-methyltransferase (225 aa).

At 1–2 (MT) the chain is on the periplasmic side. Residues 3-23 (MLLPLFILVGFIADYFVNAIA) form a helical membrane-spanning segment. The Cytoplasmic segment spans residues 24-67 (YHLSPLEDKTALTFRQVLVHFRQKKYAWHDTVPLILCVAAAIAC). Residues 68–88 (ALAPFTPIVTGALFLYFCFVL) traverse the membrane as a helical segment. Topologically, residues 89-103 (TLSVIDFRTQLLPDK) are periplasmic. The chain crosses the membrane as a helical span at residues 104–124 (LTLPLLWLGLVFNAQYGLIDL). The Cytoplasmic portion of the chain corresponds to 125 to 127 (HDA). Residues 128 to 148 (VYGAVAGYGVLWCVYWGVWLV) form a helical membrane-spanning segment. Topologically, residues 149–174 (CHKEGLGYGDFKLLAAAGAWCGWQTL) are periplasmic. The chain crosses the membrane as a helical span at residues 175–195 (PMILLIASLGGIGYAIVSQLL). Topologically, residues 196–202 (QRRTITT) are cytoplasmic. Residues 203–223 (IAFGPWLALGSMINLGYLAWI) form a helical membrane-spanning segment. At 224–225 (SY) the chain is on the periplasmic side.

The protein belongs to the peptidase A24 family.

The protein resides in the cell inner membrane. The catalysed reaction is Typically cleaves a -Gly-|-Phe- bond to release an N-terminal, basic peptide of 5-8 residues from type IV prepilin, and then N-methylates the new N-terminal amino group, the methyl donor being S-adenosyl-L-methionine.. Functionally, plays a role in type II pseudopili formation by proteolytically removing the leader sequence from substrate proteins and subsequently monomethylating the alpha-amino group of the newly exposed N-terminal phenylalanine. Substrates include proteins required for biogenesis of the type II general secretory apparatus. The protein is Prepilin leader peptidase/N-methyltransferase (gspO) of Escherichia coli (strain K12).